The primary structure comprises 63 residues: MPGLAAASPAPPEAQEKKPLKPCCACPETKKARDACIIEKGEEHCGHLIEAHKECMRALGFKI.

The tract at residues 1-20 (MPGLAAASPAPPEAQEKKPL) is disordered. N6-acetyllysine is present on lysine 18. Cu cation is bound by residues cysteine 23 and cysteine 24. A CHCH domain is found at 23–63 (CCACPETKKARDACIIEKGEEHCGHLIEAHKECMRALGFKI). 2 consecutive short sequence motifs (cx9C motif) follow at residues 26 to 36 (CPETKKARDAC) and 45 to 55 (CGHLIEAHKEC). 2 disulfides stabilise this stretch: cysteine 26-cysteine 55 and cysteine 36-cysteine 45. Lysine 30 bears the N6-acetyllysine mark.

This sequence belongs to the COX17 family. In terms of assembly, interacts with COA1. Interacts with the chaperone CHCHD4; this is important for correct folding and the formation of disulfide bonds that stabilize the structure. Acetylation by KAT8 promotes assembly of the mitochondrial respiratory chain complex IV (CIV).

Its subcellular location is the mitochondrion intermembrane space. The protein localises to the cytoplasm. Functionally, copper metallochaperone essential for the assembly of the mitochondrial respiratory chain complex IV (CIV), also known as cytochrome c oxidase. Binds two copper ions and delivers them to the metallochaperone SCO1 which transports the copper ions to the Cu(A) site on the cytochrome c oxidase subunit II (MT-CO2/COX2). The polypeptide is Cytochrome c oxidase copper chaperone (Cox17) (Mus musculus (Mouse)).